The following is a 387-amino-acid chain: Histone deacetylase 2 (387 aa).

The interval 73-382 is histone deacetylase; sequence KVSIIYSSSY…IENLSRQGLI (310 aa). Residue histidine 201 is the Proton donor/acceptor of the active site. Zn(2+) is bound by residues aspartate 238, histidine 240, and aspartate 318.

Belongs to the histone deacetylase family. HD type 3 subfamily. It depends on Zn(2+) as a cofactor.

Its subcellular location is the nucleus. The enzyme catalyses N(6)-acetyl-L-lysyl-[histone] + H2O = L-lysyl-[histone] + acetate. Its function is as follows. Responsible for the deacetylation of lysine residues on the N-terminal part of the core histones (H2A, H2B, H3 and H4). Histone deacetylation gives a tag for epigenetic repression and plays an important role in transcriptional regulation, cell cycle progression and developmental events. Histone deacetylases act via the formation of large multiprotein complexes. This chain is Histone deacetylase 2 (HDA2), found in Arabidopsis thaliana (Mouse-ear cress).